The primary structure comprises 254 residues: Triosephosphate isomerase (254 aa).

Residue 9 to 11 (NWK) coordinates substrate. The Electrophile role is filled by H98. Residue E170 is the Proton acceptor of the active site. Substrate contacts are provided by residues G176, S215, and 236 to 237 (GG).

This sequence belongs to the triosephosphate isomerase family. In terms of assembly, homodimer.

Its subcellular location is the cytoplasm. The enzyme catalyses D-glyceraldehyde 3-phosphate = dihydroxyacetone phosphate. It functions in the pathway carbohydrate biosynthesis; gluconeogenesis. The protein operates within carbohydrate degradation; glycolysis; D-glyceraldehyde 3-phosphate from glycerone phosphate: step 1/1. Involved in the gluconeogenesis. Catalyzes stereospecifically the conversion of dihydroxyacetone phosphate (DHAP) to D-glyceraldehyde-3-phosphate (G3P). The protein is Triosephosphate isomerase of Buchnera aphidicola subsp. Cinara cedri (strain Cc).